The sequence spans 694 residues: Scarecrow-like protein 33 (694 aa).

A disordered region spans residues 289-313; it reads PAKASTFSKSPKGEKPEASGNSYTK. The GRAS domain maps to 309–692; sequence NSYTKETPDL…RIVYGSSIWV (384 aa). The segment at 316 to 376 is leucine repeat I (LRI); sequence PDLRTMLVSC…EARLAGIGTQ (61 aa). The VHIID stretch occupies residues 395–462; that stretch reads YQTYISVCPF…GSSCKLRITG (68 aa). The short motif at 428 to 432 is the VHIID element; it reads IHIID. A leucine repeat II (LRII) region spans residues 478-510; that stretch reads ETGRRLAKYCQKFNIPFEYNAIAQKWESIKLED. Residues 519–613 are PFYRE; it reads VAVNSLFRFR…KEFYGREIMN (95 aa). An SAW region spans residues 616–692; that stretch reads ACEGTERVER…RIVYGSSIWV (77 aa).

Belongs to the GRAS family. As to quaternary structure, interacts with SNRNP35.

It localises to the nucleus. Probable transcription factor involved in plant development. The protein is Scarecrow-like protein 33 (SCL33) of Arabidopsis thaliana (Mouse-ear cress).